The primary structure comprises 345 residues: Biotin synthase (345 aa).

The region spanning 66–291 (PEVEIEGIIS…RTILRFAGGR (226 aa)) is the Radical SAM core domain. Positions 81, 85, and 88 each coordinate [4Fe-4S] cluster. [2Fe-2S] cluster contacts are provided by Cys-124, Cys-157, Cys-216, and Arg-286.

It belongs to the radical SAM superfamily. Biotin synthase family. Homodimer. [4Fe-4S] cluster serves as cofactor. [2Fe-2S] cluster is required as a cofactor.

It carries out the reaction (4R,5S)-dethiobiotin + (sulfur carrier)-SH + 2 reduced [2Fe-2S]-[ferredoxin] + 2 S-adenosyl-L-methionine = (sulfur carrier)-H + biotin + 2 5'-deoxyadenosine + 2 L-methionine + 2 oxidized [2Fe-2S]-[ferredoxin]. The protein operates within cofactor biosynthesis; biotin biosynthesis; biotin from 7,8-diaminononanoate: step 2/2. Its function is as follows. Catalyzes the conversion of dethiobiotin (DTB) to biotin by the insertion of a sulfur atom into dethiobiotin via a radical-based mechanism. The sequence is that of Biotin synthase from Mycobacterium leprae (strain Br4923).